The primary structure comprises 387 residues: Succinate--CoA ligase [ADP-forming] subunit beta (387 aa).

ATP-binding positions include Lys46, 53-55, Glu99, Ala102, and Glu107; that span reads GRG. Positions 199 and 213 each coordinate Mg(2+). Substrate-binding positions include Asn264 and 321–323; that span reads GIV.

This sequence belongs to the succinate/malate CoA ligase beta subunit family. As to quaternary structure, heterotetramer of two alpha and two beta subunits. The cofactor is Mg(2+).

It catalyses the reaction succinate + ATP + CoA = succinyl-CoA + ADP + phosphate. The enzyme catalyses GTP + succinate + CoA = succinyl-CoA + GDP + phosphate. It functions in the pathway carbohydrate metabolism; tricarboxylic acid cycle; succinate from succinyl-CoA (ligase route): step 1/1. Succinyl-CoA synthetase functions in the citric acid cycle (TCA), coupling the hydrolysis of succinyl-CoA to the synthesis of either ATP or GTP and thus represents the only step of substrate-level phosphorylation in the TCA. The beta subunit provides nucleotide specificity of the enzyme and binds the substrate succinate, while the binding sites for coenzyme A and phosphate are found in the alpha subunit. The sequence is that of Succinate--CoA ligase [ADP-forming] subunit beta from Campylobacter jejuni (strain RM1221).